The primary structure comprises 142 residues: Transcriptional regulator MraZ (142 aa).

SpoVT-AbrB domains are found at residues 5-47 (EFQH…PQHE) and 76-119 (ATEC…SKEE).

The protein belongs to the MraZ family. In terms of assembly, forms oligomers.

Its subcellular location is the cytoplasm. It localises to the nucleoid. The sequence is that of Transcriptional regulator MraZ from Desulforamulus reducens (strain ATCC BAA-1160 / DSM 100696 / MI-1) (Desulfotomaculum reducens).